Reading from the N-terminus, the 479-residue chain is U3 snoRNP-associated protein-like EMB2271 (479 aa).

Residues 1-73 (MKLEKKKGIG…AHETVGEKRK (73 aa)) are disordered. The span at 8 to 17 (GIGAKRRGKK) shows a compositional bias: basic residues. Basic and acidic residues predominate over residues 18-38 (SSIDHDPFLEEETEKRRKFNY). Residues 39–51 (DDDDDIESVESEE) show a composition bias toward acidic residues. Positions 52–73 (EGKVGEEVEDEFAHETVGEKRK) are enriched in basic and acidic residues. WD repeat units follow at residues 143–182 (KHQHSVTGVALSDDDSRGFSVSKDGTILHWDVSSGKSDEY), 204–243 (RHNKQSLALAVSSDGRYLATGGVDCHVHLWDIRTREHVQA), 246–285 (GHCGIVSSLCFREGTAELFSGSYDGTLSIWNAEHRTYIES), 288–326 (GHQSELLSIDALGRERVLSVGRDRTMQLYKVPESTRLIY), 328–366 (ASESNFECCCFVNSDEFLSGSDNGSIALWSILKKKPVFI), 386–425 (PACSWVSSVAVCRGSELAASGAGNGCVRLWGVESGSSAIQ), and 431–471 (PLPG…QNGV).

This sequence belongs to the WD repeat RRP9 family.

The protein resides in the nucleus. Its subcellular location is the nucleolus. Its function is as follows. Component of a nucleolar small nuclear ribonucleoprotein particle (snoRNP) thought to participate in the processing and modification of pre-ribosomal RNA. Essential for embryogenesis. May function during late embryogenesis. The chain is U3 snoRNP-associated protein-like EMB2271 from Arabidopsis thaliana (Mouse-ear cress).